A 170-amino-acid chain; its full sequence is MLTRSKAGINKLNPKYSLTITTTIKKEPKSVIFALKDPGWCQAMQEELDALSRNKTWILVPPPVNQNILGCKWVFKTKLHSDGTLDRLKARLVAKGFHQEEGIYFVETYSPVVRTATIRTILNVAQQLEVGQSINWMFKMHFSMGIFKKKFICINLLVLRILFIHPMCVC.

The protein localises to the mitochondrion. This is an uncharacterized protein from Arabidopsis thaliana (Mouse-ear cress).